The primary structure comprises 59 residues: Photosystem II reaction center protein K (59 aa).

Positions 1-22 (MLNIFSLICLNSALYPSSLFFA) are excised as a propeptide. A helical membrane pass occupies residues 38–58 (MPVIPLFFFLLAFVWQAAVSF).

This sequence belongs to the PsbK family. As to quaternary structure, PSII is composed of 1 copy each of membrane proteins PsbA, PsbB, PsbC, PsbD, PsbE, PsbF, PsbH, PsbI, PsbJ, PsbK, PsbL, PsbM, PsbT, PsbX, PsbY, PsbZ, Psb30/Ycf12, at least 3 peripheral proteins of the oxygen-evolving complex and a large number of cofactors. It forms dimeric complexes.

It is found in the plastid. It localises to the chloroplast thylakoid membrane. One of the components of the core complex of photosystem II (PSII). PSII is a light-driven water:plastoquinone oxidoreductase that uses light energy to abstract electrons from H(2)O, generating O(2) and a proton gradient subsequently used for ATP formation. It consists of a core antenna complex that captures photons, and an electron transfer chain that converts photonic excitation into a charge separation. The chain is Photosystem II reaction center protein K from Lactuca sativa (Garden lettuce).